The primary structure comprises 354 residues: UDP-N-acetylglucosamine--N-acetylmuramyl-(pentapeptide) pyrophosphoryl-undecaprenol N-acetylglucosamine transferase (354 aa).

UDP-N-acetyl-alpha-D-glucosamine is bound by residues 14 to 16 (TGG), asparagine 126, arginine 162, serine 190, isoleucine 243, 262 to 267 (ALTVSE), and glutamine 287.

The protein belongs to the glycosyltransferase 28 family. MurG subfamily.

The protein localises to the cell inner membrane. The enzyme catalyses di-trans,octa-cis-undecaprenyl diphospho-N-acetyl-alpha-D-muramoyl-L-alanyl-D-glutamyl-meso-2,6-diaminopimeloyl-D-alanyl-D-alanine + UDP-N-acetyl-alpha-D-glucosamine = di-trans,octa-cis-undecaprenyl diphospho-[N-acetyl-alpha-D-glucosaminyl-(1-&gt;4)]-N-acetyl-alpha-D-muramoyl-L-alanyl-D-glutamyl-meso-2,6-diaminopimeloyl-D-alanyl-D-alanine + UDP + H(+). It participates in cell wall biogenesis; peptidoglycan biosynthesis. Its function is as follows. Cell wall formation. Catalyzes the transfer of a GlcNAc subunit on undecaprenyl-pyrophosphoryl-MurNAc-pentapeptide (lipid intermediate I) to form undecaprenyl-pyrophosphoryl-MurNAc-(pentapeptide)GlcNAc (lipid intermediate II). The polypeptide is UDP-N-acetylglucosamine--N-acetylmuramyl-(pentapeptide) pyrophosphoryl-undecaprenol N-acetylglucosamine transferase (Photobacterium profundum (strain SS9)).